Here is a 582-residue protein sequence, read N- to C-terminus: Formate--tetrahydrofolate ligase (582 aa).

65–72 (TPLGEGKT) provides a ligand contact to ATP.

It belongs to the formate--tetrahydrofolate ligase family.

It catalyses the reaction (6S)-5,6,7,8-tetrahydrofolate + formate + ATP = (6R)-10-formyltetrahydrofolate + ADP + phosphate. Its pathway is one-carbon metabolism; tetrahydrofolate interconversion. The protein is Formate--tetrahydrofolate ligase of Vibrio vulnificus (strain CMCP6).